The primary structure comprises 158 residues: NAD(P)H-quinone oxidoreductase subunit J, chloroplastic (158 aa).

It belongs to the complex I 30 kDa subunit family. In terms of assembly, NDH is composed of at least 16 different subunits, 5 of which are encoded in the nucleus.

The protein localises to the plastid. Its subcellular location is the chloroplast thylakoid membrane. The catalysed reaction is a plastoquinone + NADH + (n+1) H(+)(in) = a plastoquinol + NAD(+) + n H(+)(out). It carries out the reaction a plastoquinone + NADPH + (n+1) H(+)(in) = a plastoquinol + NADP(+) + n H(+)(out). Functionally, NDH shuttles electrons from NAD(P)H:plastoquinone, via FMN and iron-sulfur (Fe-S) centers, to quinones in the photosynthetic chain and possibly in a chloroplast respiratory chain. The immediate electron acceptor for the enzyme in this species is believed to be plastoquinone. Couples the redox reaction to proton translocation, and thus conserves the redox energy in a proton gradient. The protein is NAD(P)H-quinone oxidoreductase subunit J, chloroplastic of Angiopteris evecta (Mule's foot fern).